Here is a 2326-residue protein sequence, read N- to C-terminus: Telomere-associated protein RIF1 (2326 aa).

Disordered regions lie at residues 381 to 410, 1105 to 1965, and 1993 to 2050; these read QGTP…SPAT, YTQS…CITP, and VENK…DDSL. A compositionally biased stretch (polar residues) spans 382-396; that stretch reads GTPSRVPSNPNSANP. Composition is skewed to basic and acidic residues over residues 1112–1126 and 1150–1182; these read SLEK…EDFK and CKVD…RGDR. Residues 1216–1225 are compositionally biased toward low complexity; the sequence is SAISCSSTSS. 2 stretches are compositionally biased toward polar residues: residues 1233-1242 and 1252-1270; these read QPASRRQSFI and SRPF…SQSA. The segment covering 1290–1299 has biased composition (basic and acidic residues); sequence KSGEESRKSS. Composition is skewed to polar residues over residues 1318 to 1332 and 1341 to 1353; these read MEQQ…VTNS and SFVS…SPES. Residues 1376-1402 show a composition bias toward basic and acidic residues; sequence PDIKKAEAVMAEIEKVRAFEMDSKENT. Positions 1403–1412 are enriched in polar residues; sequence PPKTAVSSEQ. Composition is skewed to basic and acidic residues over residues 1448 to 1480, 1489 to 1511, and 1519 to 1539; these read QDKE…DASQ, ASEH…DLGS, and GADE…KSDS. Over residues 1564-1573 the composition is skewed to polar residues; sequence SSQGLLSSIE. Basic residues predominate over residues 1586–1595; the sequence is SLKKKSGKTK. The segment covering 1596 to 1609 has biased composition (basic and acidic residues); that stretch reads NKSDSLEGKRKDVQ. Polar residues-rich tracts occupy residues 1610–1640 and 1671–1683; these read PESQ…SEVS and RTSP…SVEQ. Basic and acidic residues predominate over residues 1697–1712; the sequence is RVSDEVLKGDENKCIE. Positions 1713 to 1745 are enriched in polar residues; it reads KQSSVEQHSSVQPENVQGANTSGSDLSSLQMQD. Basic and acidic residues predominate over residues 1776-1785; the sequence is SKSEDPRELI. Positions 1795 to 1813 are enriched in polar residues; that stretch reads AVSTAEVSGSSNLEESLSI. Composition is skewed to basic and acidic residues over residues 1869–1884, 1908–1925, and 1932–1954; these read VEIK…DRAE, SEEK…HGEM, and DGSK…KEEA. Over residues 2009-2036 the composition is skewed to polar residues; sequence SFTSVNGSPSGVQARCTWSPSASPSTSI.

The protein belongs to the RIF1 family. Interacts with TP53BP1 (when phosphorylated by ATM).

The protein resides in the nucleus. Its subcellular location is the chromosome. It localises to the telomere. The protein localises to the cytoplasm. It is found in the cytoskeleton. The protein resides in the spindle. Functionally, key regulator of TP53BP1 that plays a key role in the repair of double-strand DNA breaks (DSBs) in response to DNA damage: acts by promoting non-homologous end joining (NHEJ)-mediated repair of DSBs. In response to DNA damage, interacts with ATM-phosphorylated TP53BP1, allowing recruitment to DNA DSBs. Once recruited to DSBs, RIF1 and TP53BP1 act by promoting NHEJ-mediated repair of DSBs. In the same time, RIF1 and TP53BP1 specifically counteract DSBs resection via homologous recombination (HR) during G1 phase. This is Telomere-associated protein RIF1 from Gallus gallus (Chicken).